A 191-amino-acid polypeptide reads, in one-letter code: Cell division protein SepF (191 aa).

Residues 150–164 (TSSSPEEASPSSVST) are compositionally biased toward low complexity. Residues 150–191 (TSSSPEEASPSSVSTENTPQYSLGKNTTPEPAWGNSKLSAYS) are disordered. The span at 165–178 (ENTPQYSLGKNTTP) shows a compositional bias: polar residues.

The protein belongs to the SepF family. Homodimer. Interacts with FtsZ.

It is found in the cytoplasm. In terms of biological role, cell division protein that is part of the divisome complex and is recruited early to the Z-ring. Probably stimulates Z-ring formation, perhaps through the cross-linking of FtsZ protofilaments. Its function overlaps with FtsA. This Prochlorococcus marinus (strain AS9601) protein is Cell division protein SepF.